The primary structure comprises 295 residues: Glutamyl-Q tRNA(Asp) synthetase (295 aa).

L-glutamate-binding positions include 5 to 9 and Glu41; that span reads RFAPS. A 'HIGH' region motif is present at residues 8 to 18; the sequence is PSPTGLLHIGS. 4 residues coordinate Zn(2+): Cys97, Cys99, Tyr117, and Cys121. Residues Tyr178 and Arg196 each coordinate L-glutamate. A 'KMSKS' region motif is present at residues 234-238; that stretch reads KWSKQ. Lys237 contacts ATP.

The protein belongs to the class-I aminoacyl-tRNA synthetase family. GluQ subfamily. It depends on Zn(2+) as a cofactor.

Functionally, catalyzes the tRNA-independent activation of glutamate in presence of ATP and the subsequent transfer of glutamate onto a tRNA(Asp). Glutamate is transferred on the 2-amino-5-(4,5-dihydroxy-2-cyclopenten-1-yl) moiety of the queuosine in the wobble position of the QUC anticodon. This is Glutamyl-Q tRNA(Asp) synthetase from Neisseria meningitidis serogroup B (strain ATCC BAA-335 / MC58).